The primary structure comprises 369 residues: H-2 class I histocompatibility antigen, K-B alpha chain (369 aa).

The first 21 residues, 1 to 21 (MVPCTLLLLLAAALAPTQTRA), serve as a signal peptide directing secretion. The tract at residues 22–111 (GPHSLRYFVT…LLGYYNQSKG (90 aa)) is alpha-1. The Extracellular portion of the chain corresponds to 22-305 (GPHSLRYFVT…EPPPSTVSNM (284 aa)). N-linked (GlcNAc...) asparagine glycosylation is present at N107. The segment at 112–203 (GSHTIQVISG…KNGNATLLRT (92 aa)) is alpha-2. Cysteines 122 and 185 form a disulfide. N-linked (GlcNAc...) asparagine glycosylation occurs at N197. The alpha-3 stretch occupies residues 204 to 295 (DSPKAHVTHH…GLPEPLTLRW (92 aa)). Positions 206–294 (PKAHVTHHSR…QGLPEPLTLR (89 aa)) constitute an Ig-like C1-type domain. An intrachain disulfide couples C224 to C280. The segment at 296-305 (EPPPSTVSNM) is connecting peptide. Residues 306–328 (ATVAVLVVLGAAIVTGAVVAFVM) traverse the membrane as a helical segment. Topologically, residues 329 to 369 (KMRRRNTGGKGGDYALAPGSQTSDLSLPDCKVMVHDPHSLA) are cytoplasmic. Phosphoserine occurs at positions 351 and 354.

It belongs to the MHC class I family. In terms of assembly, heterodimer of an alpha chain and a beta chain (beta-2-microglobulin).

The protein resides in the membrane. In terms of biological role, involved in the presentation of foreign antigens to the immune system. This Mus musculus (Mouse) protein is H-2 class I histocompatibility antigen, K-B alpha chain (H2-K1).